The primary structure comprises 554 residues: Glucose-6-phosphate isomerase (554 aa).

Residue E358 is the Proton donor of the active site. Residues H389 and K515 contribute to the active site. Residues 527–540 (ADNSPAPQSDSSTD) show a composition bias toward polar residues. Residues 527 to 554 (ADNSPAPQSDSSTDALVRRYRSERGRTS) are disordered. Positions 542-554 (LVRRYRSERGRTS) are enriched in basic and acidic residues.

The protein belongs to the GPI family.

It localises to the cytoplasm. The catalysed reaction is alpha-D-glucose 6-phosphate = beta-D-fructose 6-phosphate. Its pathway is carbohydrate biosynthesis; gluconeogenesis. The protein operates within carbohydrate degradation; glycolysis; D-glyceraldehyde 3-phosphate and glycerone phosphate from D-glucose: step 2/4. Functionally, catalyzes the reversible isomerization of glucose-6-phosphate to fructose-6-phosphate. The sequence is that of Glucose-6-phosphate isomerase from Mycobacterium avium (strain 104).